Reading from the N-terminus, the 483-residue chain is Endoplasmic reticulum lectin 1 (483 aa).

The signal sequence occupies residues 1–33; that stretch reads MEEGDGGLRSLVPGGPLLLVLYGLLEASGGGRA. MRH domains follow at residues 111–246 and 342–469; these read SSCS…LCSH and SYCF…ICKI. A disulfide bridge connects residues cysteine 113 and cysteine 126. A glycan (N-linked (GlcNAc...) asparagine) is linked at asparagine 195. 5 disulfide bridges follow: cysteine 199–cysteine 232, cysteine 215–cysteine 244, cysteine 344–cysteine 357, cysteine 421–cysteine 455, and cysteine 436–cysteine 467.

May form a complex with OS9, HSPA5, SYVN1, and SEL1L with which it interacts directly. Interacts (via PRKCSH 2 domain) with KREMEN2 (when glycosylated). Interacts with HSPA5. N-glycosylated.

The protein resides in the endoplasmic reticulum lumen. Functionally, probable lectin that binds selectively to improperly folded lumenal proteins. May function in endoplasmic reticulum quality control and endoplasmic reticulum-associated degradation (ERAD) of both non-glycosylated proteins and glycoproteins. This Mus musculus (Mouse) protein is Endoplasmic reticulum lectin 1 (Erlec1).